We begin with the raw amino-acid sequence, 202 residues long: Na(+)-translocating NADH-quinone reductase subunit E (202 aa).

The next 6 helical transmembrane spans lie at 11–31 (SVFI…FLAM), 35–55 (INAA…TVPA), 81–101 (FLSF…MEMV), 114–134 (GVFL…LFMV), 144–164 (VVYG…LAGI), and 180–200 (LGIT…FGGI).

This sequence belongs to the NqrDE/RnfAE family. In terms of assembly, composed of six subunits; NqrA, NqrB, NqrC, NqrD, NqrE and NqrF.

Its subcellular location is the cell inner membrane. The catalysed reaction is a ubiquinone + n Na(+)(in) + NADH + H(+) = a ubiquinol + n Na(+)(out) + NAD(+). In terms of biological role, NQR complex catalyzes the reduction of ubiquinone-1 to ubiquinol by two successive reactions, coupled with the transport of Na(+) ions from the cytoplasm to the periplasm. NqrA to NqrE are probably involved in the second step, the conversion of ubisemiquinone to ubiquinol. This chain is Na(+)-translocating NADH-quinone reductase subunit E, found in Cellvibrio japonicus (strain Ueda107) (Pseudomonas fluorescens subsp. cellulosa).